A 139-amino-acid chain; its full sequence is uncharacterized protein (139 aa).

Residues 3 to 110 enclose the HIT domain; it reads IFCNIVEGRD…VPTWSQDPDI (108 aa). The short motif at 95–99 is the Histidine triad motif element; sequence HSHFH.

This is an uncharacterized protein from Saccharolobus solfataricus (strain ATCC 35092 / DSM 1617 / JCM 11322 / P2) (Sulfolobus solfataricus).